A 202-amino-acid chain; its full sequence is NADH-quinone oxidoreductase subunit C (202 aa).

This sequence belongs to the complex I 30 kDa subunit family. As to quaternary structure, NDH-1 is composed of 14 different subunits. Subunits NuoB, C, D, E, F, and G constitute the peripheral sector of the complex.

Its subcellular location is the cell inner membrane. The enzyme catalyses a quinone + NADH + 5 H(+)(in) = a quinol + NAD(+) + 4 H(+)(out). Its function is as follows. NDH-1 shuttles electrons from NADH, via FMN and iron-sulfur (Fe-S) centers, to quinones in the respiratory chain. The immediate electron acceptor for the enzyme in this species is believed to be ubiquinone. Couples the redox reaction to proton translocation (for every two electrons transferred, four hydrogen ions are translocated across the cytoplasmic membrane), and thus conserves the redox energy in a proton gradient. The protein is NADH-quinone oxidoreductase subunit C of Bartonella henselae (strain ATCC 49882 / DSM 28221 / CCUG 30454 / Houston 1) (Rochalimaea henselae).